We begin with the raw amino-acid sequence, 274 residues long: Diaminopimelate epimerase (274 aa).

Residues asparagine 11, glutamine 44, and asparagine 64 each contribute to the substrate site. The active-site Proton donor is cysteine 73. Substrate-binding positions include 74–75, asparagine 157, asparagine 190, and 208–209; these read GN and ER. The active-site Proton acceptor is cysteine 217. 218–219 contributes to the substrate binding site; that stretch reads GS.

The protein belongs to the diaminopimelate epimerase family. Homodimer.

The protein resides in the cytoplasm. It carries out the reaction (2S,6S)-2,6-diaminopimelate = meso-2,6-diaminopimelate. It functions in the pathway amino-acid biosynthesis; L-lysine biosynthesis via DAP pathway; DL-2,6-diaminopimelate from LL-2,6-diaminopimelate: step 1/1. Catalyzes the stereoinversion of LL-2,6-diaminopimelate (L,L-DAP) to meso-diaminopimelate (meso-DAP), a precursor of L-lysine and an essential component of the bacterial peptidoglycan. The sequence is that of Diaminopimelate epimerase from Escherichia coli O81 (strain ED1a).